We begin with the raw amino-acid sequence, 192 residues long: Bifunctional protein PyrR (192 aa).

A PRPP-binding motif is present at residues 107–119; the sequence is VVLVDDVLFSGRT.

This sequence belongs to the purine/pyrimidine phosphoribosyltransferase family. PyrR subfamily.

It carries out the reaction UMP + diphosphate = 5-phospho-alpha-D-ribose 1-diphosphate + uracil. Its function is as follows. Regulates the transcription of the pyrimidine nucleotide (pyr) operon in response to exogenous pyrimidines. Also displays a weak uracil phosphoribosyltransferase activity which is not physiologically significant. The protein is Bifunctional protein PyrR of Corynebacterium efficiens (strain DSM 44549 / YS-314 / AJ 12310 / JCM 11189 / NBRC 100395).